We begin with the raw amino-acid sequence, 118 residues long: UPF0212 protein HQ_2663A (118 aa).

This sequence belongs to the UPF0212 family.

The sequence is that of UPF0212 protein HQ_2663A from Haloquadratum walsbyi (strain DSM 16790 / HBSQ001).